A 366-amino-acid polypeptide reads, in one-letter code: Anhydro-N-acetylmuramic acid kinase (366 aa).

12 to 19 (GTSLDGID) provides a ligand contact to ATP.

The protein belongs to the anhydro-N-acetylmuramic acid kinase family.

The catalysed reaction is 1,6-anhydro-N-acetyl-beta-muramate + ATP + H2O = N-acetyl-D-muramate 6-phosphate + ADP + H(+). It functions in the pathway amino-sugar metabolism; 1,6-anhydro-N-acetylmuramate degradation. It participates in cell wall biogenesis; peptidoglycan recycling. Catalyzes the specific phosphorylation of 1,6-anhydro-N-acetylmuramic acid (anhMurNAc) with the simultaneous cleavage of the 1,6-anhydro ring, generating MurNAc-6-P. Is required for the utilization of anhMurNAc either imported from the medium or derived from its own cell wall murein, and thus plays a role in cell wall recycling. The sequence is that of Anhydro-N-acetylmuramic acid kinase from Nitrosospira multiformis (strain ATCC 25196 / NCIMB 11849 / C 71).